A 197-amino-acid chain; its full sequence is HTH-type transcriptional regulator BetI (197 aa).

One can recognise an HTH tetR-type domain in the interval 8-68 (PIRRQQLIEA…ATMGYIMSML (61 aa)). The segment at residues 31-50 (SIALIARLAGVSNGIISHYF) is a DNA-binding region (H-T-H motif).

The protein operates within amine and polyamine biosynthesis; betaine biosynthesis via choline pathway [regulation]. In terms of biological role, repressor involved in the biosynthesis of the osmoprotectant glycine betaine. It represses transcription of the choline transporter BetT and the genes of BetAB involved in the synthesis of glycine betaine. This chain is HTH-type transcriptional regulator BetI, found in Pseudomonas fluorescens (strain ATCC BAA-477 / NRRL B-23932 / Pf-5).